Here is a 131-residue protein sequence, read N- to C-terminus: Large ribosomal subunit protein bL12 (131 aa).

Residues S100 to G125 show a composition bias toward basic and acidic residues. A disordered region spans residues S100 to K131.

Belongs to the bacterial ribosomal protein bL12 family. Homodimer. Part of the ribosomal stalk of the 50S ribosomal subunit. Forms a multimeric L10(L12)X complex, where L10 forms an elongated spine to which 2 to 4 L12 dimers bind in a sequential fashion. Binds GTP-bound translation factors.

Its function is as follows. Forms part of the ribosomal stalk which helps the ribosome interact with GTP-bound translation factors. Is thus essential for accurate translation. The polypeptide is Large ribosomal subunit protein bL12 (Cyanothece sp. (strain PCC 7425 / ATCC 29141)).